A 509-amino-acid polypeptide reads, in one-letter code: MTVVTITPGAMSFADWRAIYEGASAALTVGAWDAIDASAAAVARIVAKGDPVYGINTGFGKLASVRIASDDLATLQRNIVLSHAAGTGAPSPTPVVRLMMALKLASFGVGASGVRRETAAMLEAMLARGLIPVVPSQGSVGASGDLAPLAHMAAAMIGVGKIDVGGAIMPAAEALAQAELTPLELGPKEGLALLNGTQFSTANALAGLFRAETLFRSALITGALSTEAAKGSDAPFDPRIHALRGHIGQREVGGALRTLMAGSAIRASHAIDDPRVQDPYCLRCQPQVMGAVLDLLRQAGATLGVEANGVSDNPLIFADSDEALSGGNFHAEPVAFAADMIAIALCEIGSIAERRIAMLVDPALSGLPAFLTPRPGLNSGFMIPQVTAAALVSENKQRAYPASVDSIPTSANQEDHVSMAAHGARRLLDMADNASAVIGIELLAACQGIDFHAPLKSSDALEAAHRHLRSHVPTLDDDRHFHPDMEAATALIRSGSLVAAVPASLPGVG.

The segment at residues 142-144 (ASG) is a cross-link (5-imidazolinone (Ala-Gly)). A 2,3-didehydroalanine (Ser) modification is found at Ser-143.

Belongs to the PAL/histidase family. Contains an active site 4-methylidene-imidazol-5-one (MIO), which is formed autocatalytically by cyclization and dehydration of residues Ala-Ser-Gly.

The protein localises to the cytoplasm. The enzyme catalyses L-histidine = trans-urocanate + NH4(+). The protein operates within amino-acid degradation; L-histidine degradation into L-glutamate; N-formimidoyl-L-glutamate from L-histidine: step 1/3. The sequence is that of Histidine ammonia-lyase from Sphingopyxis alaskensis (strain DSM 13593 / LMG 18877 / RB2256) (Sphingomonas alaskensis).